Reading from the N-terminus, the 343-residue chain is Protein RecA (343 aa).

64–71 (GPESSGKT) contacts ATP.

Belongs to the RecA family.

It localises to the cytoplasm. In terms of biological role, can catalyze the hydrolysis of ATP in the presence of single-stranded DNA, the ATP-dependent uptake of single-stranded DNA by duplex DNA, and the ATP-dependent hybridization of homologous single-stranded DNAs. It interacts with LexA causing its activation and leading to its autocatalytic cleavage. This Bacillus cereus (strain ATCC 10987 / NRS 248) protein is Protein RecA.